The following is a 283-amino-acid chain: Undecaprenyl-diphosphatase (283 aa).

The next 8 helical transmembrane spans lie at 4 to 24 (LLILKAVIMGIVEGITEFLPI), 45 to 65 (ADLFIVVIQLGAILAVIYEYW), 91 to 111 (QLGLSLIVATIPVMLVGFTLA), 118 to 138 (LFNPYTVAIMLILGGLLIFYV), 153 to 173 (VSLKTALLIGLMQCLALIPGT), 194 to 214 (AEFSFFLGIPVIIGAGLLDLL), 228 to 248 (ILGVGVLVSFVVGLLCIRWLV), and 258 to 278 (IFAWLRIITGIIVLLVAWIFG).

This sequence belongs to the UppP family.

It is found in the cell inner membrane. It catalyses the reaction di-trans,octa-cis-undecaprenyl diphosphate + H2O = di-trans,octa-cis-undecaprenyl phosphate + phosphate + H(+). In terms of biological role, catalyzes the dephosphorylation of undecaprenyl diphosphate (UPP). Confers resistance to bacitracin. This Psychrobacter sp. (strain PRwf-1) protein is Undecaprenyl-diphosphatase.